Here is an 877-residue protein sequence, read N- to C-terminus: DNA polymerase I (877 aa).

The 5'-3' exonuclease domain occupies 180-272; sequence TPSQFIDLKA…GLEDTLLKEK (93 aa). Residues 312–468 enclose the 3'-5' exonuclease domain; the sequence is FEIVTDKSSV…AKEKMMAELI (157 aa).

The protein belongs to the DNA polymerase type-A family. Single-chain monomer with multiple functions.

It carries out the reaction DNA(n) + a 2'-deoxyribonucleoside 5'-triphosphate = DNA(n+1) + diphosphate. In terms of biological role, in addition to polymerase activity, this DNA polymerase exhibits 3'-5' and 5'-3' exonuclease activity. This chain is DNA polymerase I (polA), found in Lactococcus lactis subsp. cremoris (strain MG1363).